The primary structure comprises 439 residues: Proline--tRNA ligase (439 aa).

It belongs to the class-II aminoacyl-tRNA synthetase family. ProS type 2 subfamily. Homodimer.

The protein localises to the cytoplasm. The catalysed reaction is tRNA(Pro) + L-proline + ATP = L-prolyl-tRNA(Pro) + AMP + diphosphate. Its function is as follows. Catalyzes the attachment of proline to tRNA(Pro) in a two-step reaction: proline is first activated by ATP to form Pro-AMP and then transferred to the acceptor end of tRNA(Pro). The polypeptide is Proline--tRNA ligase (Nitrobacter winogradskyi (strain ATCC 25391 / DSM 10237 / CIP 104748 / NCIMB 11846 / Nb-255)).